Here is a 574-residue protein sequence, read N- to C-terminus: Dihydroxy-acid dehydratase 2 (574 aa).

Residues 1–20 (MNAKTNIKQRLPSRHVTEGP) are disordered. Position 56 (cysteine 56) interacts with [2Fe-2S] cluster. A Mg(2+)-binding site is contributed by aspartate 88. Cysteine 129 is a [2Fe-2S] cluster binding site. Residues aspartate 130 and lysine 131 each coordinate Mg(2+). Lysine 131 is subject to N6-carboxylysine. Cysteine 201 serves as a coordination point for [2Fe-2S] cluster. A Mg(2+)-binding site is contributed by glutamate 451. Serine 477 acts as the Proton acceptor in catalysis.

Belongs to the IlvD/Edd family. Homodimer. It depends on [2Fe-2S] cluster as a cofactor. Requires Mg(2+) as cofactor.

It catalyses the reaction (2R)-2,3-dihydroxy-3-methylbutanoate = 3-methyl-2-oxobutanoate + H2O. The enzyme catalyses (2R,3R)-2,3-dihydroxy-3-methylpentanoate = (S)-3-methyl-2-oxopentanoate + H2O. The protein operates within amino-acid biosynthesis; L-isoleucine biosynthesis; L-isoleucine from 2-oxobutanoate: step 3/4. Its pathway is amino-acid biosynthesis; L-valine biosynthesis; L-valine from pyruvate: step 3/4. Functionally, functions in the biosynthesis of branched-chain amino acids. Catalyzes the dehydration of (2R,3R)-2,3-dihydroxy-3-methylpentanoate (2,3-dihydroxy-3-methylvalerate) into 2-oxo-3-methylpentanoate (2-oxo-3-methylvalerate) and of (2R)-2,3-dihydroxy-3-methylbutanoate (2,3-dihydroxyisovalerate) into 2-oxo-3-methylbutanoate (2-oxoisovalerate), the penultimate precursor to L-isoleucine and L-valine, respectively. This is Dihydroxy-acid dehydratase 2 from Bradyrhizobium diazoefficiens (strain JCM 10833 / BCRC 13528 / IAM 13628 / NBRC 14792 / USDA 110).